The sequence spans 137 residues: NADH dehydrogenase [ubiquinone] 1 beta subcomplex subunit 7 (137 aa).

Residue glycine 2 is the site of N-myristoyl glycine attachment. Residues 56-98 (RDYCAHHLIRLLKCKRDSFPNFLACKQERHDWDYCEHRDYVMR) enclose the CHCH domain. Positions 59 to 69 (CAHHLIRLLKC) match the Cx9C motif 1 motif. 2 disulfides stabilise this stretch: cysteine 59–cysteine 90 and cysteine 69–cysteine 80. The residue at position 73 (serine 73) is a Phosphoserine. Residues 80-90 (CKQERHDWDYC) carry the Cx9C motif 2 motif. The tract at residues 113 to 137 (KRREKKAAELAKGQGPGEVDPKVAL) is disordered.

This sequence belongs to the complex I NDUFB7 subunit family. Complex I is composed of 45 different subunits.

Its subcellular location is the mitochondrion inner membrane. The protein resides in the mitochondrion intermembrane space. Its function is as follows. Accessory subunit of the mitochondrial membrane respiratory chain NADH dehydrogenase (Complex I), that is believed not to be involved in catalysis. Complex I functions in the transfer of electrons from NADH to the respiratory chain. The immediate electron acceptor for the enzyme is believed to be ubiquinone. The polypeptide is NADH dehydrogenase [ubiquinone] 1 beta subcomplex subunit 7 (NDUFB7) (Homo sapiens (Human)).